A 998-amino-acid polypeptide reads, in one-letter code: SYGYDEKGGVSVPGPMGPSGPRGLPGPPGPGPQGFQGPPGEPGEPGSGPMGPRGPPGPPGKNGDDGEAGKPGRPGERGPPGPQGARGLPGTAGLPGMKGHRGFSGLDGAKGDAGPAGPKGEPGSPGENGAPGQMGPRGLPGERGRPGASGPAGARGNDGATGAAGPPGPTGPAGPPGFPGAVGAKGEAGPQGARGSEGPQGVRGEPGPPGPAGAAGPAGNPGADGQPGAKGANGAPGIAGAPGFPGARGPSGPQGPSGPPGPKGNSGEPGAPGSKGDTGAKGEPGPTGIQGPPGPAGEEGKRGARGEPGPTGLPGPPGERGGPGSRGFPGADGVAGPKGPAGERGSPGPAGPKGSPGEAGRPGEAGLPGAKGLTGSPGSPGPDGKTGPPGPAGQDGRPGPPGPPGARGQAGVMGFPGPKGAAGEPGKAGERGVPGPPGAVGPAGKDGEAGAQGPPGPAGPAGERGEQGPAGPGFQGLPGPAGPPGEAGKPGEQGVPGDLGAPGPSGARGERGFPGERGVQGPPGPAGPRGNGSQGAPGLQGMPGERGAAGLPGPKGDRGDAGPKGADGAPGKDGVRGLTGPIGPPGPAGAPGDKGESGPSGPAGPTGARGAPGDRGEPGPPGPAGFAGPPGADGQPGAKGEPGDAGAKGDAGPPGPAGPTGPPGPIGNVGAPGPKGARGSAGPPGATGFPGAAGRVGPPGPSGNAGPPGPPGPVGKEGGKGPRGETGPAGRPGEVGPPGPPGPGEKGSPGADGPAGAPGTPGPQGISGQRGVVGLPGQRGERGFPGLPGPSGEPGKQGPSGSSGERGPPGPMGPPGLAGPPGESGREGAPGAEGSPGRDGSPGPKGDRGETGPGPPGAPGAPGAPGPVGPAGKNGDRGETGPAGPAGPAGPAGARGPAGPQGPRGDKGETGEQGDRGIKGHRGFSGLQGPAGPPGSPGEQGPSGASGPAGPRGPPGSAGSPGKDGLNGLPGPIGPPGPRGRTGDAGPVGPPGPPGPPG.

Residues 1–998 are disordered; it reads SYGYDEKGGV…GPPGPPGPPG (998 aa). Low complexity predominate over residues 9 to 22; it reads GVSVPGPMGPSGPR. 4-hydroxyproline is present on residues proline 25, proline 28, proline 30, proline 39, proline 42, proline 45, proline 59, proline 74, proline 80, proline 89, and proline 95. A compositionally biased stretch (basic and acidic residues) spans 62–76; the sequence is NGDDGEAGKPGRPGE. The residue at position 98 (lysine 98) is a 5-hydroxylysine; alternate. O-linked (Gal...) hydroxylysine; alternate glycosylation is present at lysine 98. The residue at position 104 (serine 104) is a Phosphoserine. Positions 112 to 128 are enriched in low complexity; it reads DAGPAGPKGEPGSPGEN. Residues proline 122, proline 125, proline 131, proline 140, proline 146, proline 167, proline 176, proline 179, proline 206, proline 209, proline 221, proline 227, proline 236, proline 242, proline 245, and proline 260 each carry the 4-hydroxyproline modification. The span at 146-164 shows a compositional bias: low complexity; it reads PGASGPAGARGNDGATGAA. Residues 166 to 178 are compositionally biased toward pro residues; it reads PPGPTGPAGPPGF. Residues 212 to 251 show a composition bias toward low complexity; the sequence is AGAAGPAGNPGADGQPGAKGANGAPGIAGAPGFPGARGPS. Position 263 is a 5-hydroxylysine (lysine 263). A 4-hydroxyproline mark is found at proline 269, proline 272, proline 284, proline 293, proline 308, proline 314, proline 323, and proline 329. Residues 318–327 show a composition bias toward gly residues; that stretch reads GERGGPGSRG. Lysine 338 is subject to 5-hydroxylysine. Residues proline 347, proline 356, proline 362, proline 368, proline 377, proline 380, proline 389, proline 398, proline 404, proline 416, proline 425, proline 434, proline 437, proline 455, proline 472, proline 478, proline 484, proline 490, proline 496, proline 502, proline 514, proline 523, proline 537, proline 543, and proline 552 each carry the 4-hydroxyproline modification. The segment covering 371-397 has biased composition (low complexity); that stretch reads KGLTGSPGSPGPDGKTGPPGPAGQDGR. Over residues 406–425 the composition is skewed to low complexity; it reads ARGQAGVMGFPGPKGAAGEP. Residues 484–493 are compositionally biased toward low complexity; the sequence is PGEAGKPGEQ. Lysine 564 is subject to 5-hydroxylysine. A 4-hydroxyproline mark is found at proline 570, proline 585, and proline 591. Low complexity predominate over residues 597–611; it reads SGPSGPAGPTGARGA. Serine 600 is subject to Phosphoserine. A 4-hydroxyproline mark is found at proline 612, proline 618, proline 621, proline 630, proline 636, proline 654, proline 663, and proline 672. Positions 624 to 651 are enriched in low complexity; it reads AGFAGPPGADGQPGAKGEPGDAGAKGDA. A compositionally biased stretch (pro residues) spans 653–665; that stretch reads PPGPAGPTGPPGP. Lysine 675 carries the 5-hydroxylysine modification. A compositionally biased stretch (low complexity) spans 680 to 696; sequence SAGPPGATGFPGAAGRV. A 4-hydroxyproline mark is found at proline 684 and proline 690. 3-hydroxyproline is present on proline 698. 4-hydroxyproline is present on residues proline 699, proline 708, proline 711, proline 732, proline 741, proline 749, proline 758, proline 776, proline 785, proline 788, proline 794, proline 809, proline 815, proline 821, proline 830, and proline 836. The segment covering 725 to 734 has biased composition (low complexity); sequence ETGPAGRPGE. Residues 746-758 show a composition bias toward low complexity; that stretch reads KGSPGADGPAGAP. Positions 808 to 818 are enriched in pro residues; that stretch reads PPGPMGPPGLA. Residue lysine 845 is modified to 5-hydroxylysine. Pro residues predominate over residues 853–868; the sequence is PGPPGAPGAPGAPGPV. 4-hydroxyproline is present on residues proline 856, proline 859, and proline 862. Low complexity predominate over residues 889–903; the sequence is AGPAGARGPAGPQGP. Over residues 904–918 the composition is skewed to basic and acidic residues; the sequence is RGDKGETGEQGDRGI. Lysine 907 carries the post-translational modification 5-hydroxylysine. 5-hydroxylysine; alternate is present on lysine 919. An O-linked (Gal...) hydroxylysine; alternate glycan is attached at lysine 919. A 4-hydroxyproline mark is found at proline 934, proline 937, proline 955, and proline 970. The span at 937–970 shows a compositional bias: low complexity; sequence PGEQGPSGASGPAGPRGPPGSAGSPGKDGLNGLP. Proline 975 bears the 3-hydroxyproline mark. Proline 976 bears the 4-hydroxyproline mark. A compositionally biased stretch (pro residues) spans 988-998; the sequence is VGPPGPPGPPG. Residue proline 990 is modified to 3-hydroxyproline. 4-hydroxyproline is present on proline 991. 3-hydroxyproline is present on proline 993. 4-hydroxyproline is present on proline 994. Proline 996 is subject to 3-hydroxyproline. Proline 997 is subject to 4-hydroxyproline.

The protein belongs to the fibrillar collagen family. Trimers of one alpha 2(I) and two alpha 1(I) chains. Contains mostly 4-hydroxyproline. Proline residues at the third position of the tripeptide repeating unit (G-X-Y) are hydroxylated in some or all of the chains. In terms of processing, contains 3-hydroxyproline at a few sites. This modification occurs on the first proline residue in the sequence motif Gly-Pro-Hyp, where Hyp is 4-hydroxyproline. Post-translationally, lysine residues at the third position of the tripeptide repeating unit (G-X-Y) are 5-hydroxylated in some or all of the chains. O-glycosylated on hydroxylated lysine residues. The O-linked glycan consists of a Glc-Gal disaccharide. As to expression, expressed in bones.

It is found in the secreted. The protein resides in the extracellular space. Its subcellular location is the extracellular matrix. Functionally, type I collagen is a member of group I collagen (fibrillar forming collagen). In Nothrotheriops shastensis (Shasta ground sloth), this protein is Collagen alpha-1(I) chain.